The primary structure comprises 236 residues: MFDSLKNFLKKSIEDLDGKELEISKEFQEYHNKDSKYIIKNWLFESPQYRKWRVTKLDGGDKLQVFNTVAYPNFKSESPILGADILWFGTSQKLLAIFDYQPLIQEKKYLYQYCSSLDFIKKKYSVFDNNKMKNIYDSKKYFSPWVMICRGNKLNLDRDLNSIFYLFVSDYLRINKLNQNNQFLNYEQIKNKQIDYDKYSAEKDPADKLFKSFFGENWTCNFINNFLFTLNNYSKD.

Belongs to the HY2 family.

The catalysed reaction is 15,16-dihydrobiliverdin + oxidized 2[4Fe-4S]-[ferredoxin] = biliverdin IXalpha + reduced 2[4Fe-4S]-[ferredoxin] + 2 H(+). Its function is as follows. Catalyzes the two-electron reduction of biliverdin IX-alpha at the C15 methine bridge. In Prochlorococcus marinus (strain MIT 9515), this protein is 15,16-dihydrobiliverdin:ferredoxin oxidoreductase.